We begin with the raw amino-acid sequence, 109 residues long: Oncomodulin (109 aa).

Ser2 is subject to N-acetylserine. 2 EF-hand domains span residues 39–74 (MSASQVKDIFRFIDNDQSGYLDGDELKYFLQKFQSD) and 78–109 (LTESETKSLMDAADNDGDGKIGADEFQEMVHS). Ca(2+)-binding residues include Asp52, Asp54, Ser56, Tyr58, Glu63, Asp91, Asp93, Asp95, Lys97, and Glu102.

This sequence belongs to the parvalbumin family. Found in tumor tissues and not detected in normal tissues.

Its function is as follows. Has some calmodulin-like activity with respect to enzyme activation and growth regulation. Binds two calcium ions. In Rattus norvegicus (Rat), this protein is Oncomodulin (Ocm).